Consider the following 506-residue polypeptide: TOM1-like protein 3 (506 aa).

One can recognise a VHS domain in the interval 12–141 (ATNDMLIGPD…ELRSAGIEFP (130 aa)). Residues 180–268 (DASALSMEEI…VLQHHDDKAK (89 aa)) enclose the GAT domain. Disordered stretches follow at residues 266–328 (KAKG…PPSS), 351–384 (ETFENVKPPSTSQSSNHDYSAPIFDEPVPQSKSP), and 398–477 (EQLP…PEDI). A compositionally biased stretch (acidic residues) spans 288–298 (DDDDDESDDDF). Serine 294 carries the phosphoserine modification. Polar residues predominate over residues 358 to 368 (PPSTSQSSNHD). Position 383 is a phosphoserine (serine 383). Over residues 450-460 (QSRNLSLNPTA) the composition is skewed to polar residues. The segment covering 468–477 (PKKDDKPEDI) has biased composition (basic and acidic residues).

This sequence belongs to the TOM1 family. Preferentially expressed in cauline leaves.

The protein resides in the membrane. In terms of biological role, might contribute to the loading of the ESCRT machinery. This is TOM1-like protein 3 from Arabidopsis thaliana (Mouse-ear cress).